The following is a 191-amino-acid chain: 3-isopropylmalate dehydratase small subunit (191 aa).

The protein belongs to the LeuD family. LeuD type 1 subfamily. In terms of assembly, heterodimer of LeuC and LeuD.

It catalyses the reaction (2R,3S)-3-isopropylmalate = (2S)-2-isopropylmalate. It functions in the pathway amino-acid biosynthesis; L-leucine biosynthesis; L-leucine from 3-methyl-2-oxobutanoate: step 2/4. Catalyzes the isomerization between 2-isopropylmalate and 3-isopropylmalate, via the formation of 2-isopropylmaleate. The chain is 3-isopropylmalate dehydratase small subunit from Staphylococcus haemolyticus (strain JCSC1435).